The following is a 423-amino-acid chain: Serine--tRNA ligase (423 aa).

L-serine is bound at residue 229–231 (TAE). 258–260 (RRE) serves as a coordination point for ATP. E281 is a binding site for L-serine. Residue 345-348 (EISS) coordinates ATP. Residue S379 participates in L-serine binding.

The protein belongs to the class-II aminoacyl-tRNA synthetase family. Type-1 seryl-tRNA synthetase subfamily. As to quaternary structure, homodimer. The tRNA molecule binds across the dimer.

The protein resides in the cytoplasm. It carries out the reaction tRNA(Ser) + L-serine + ATP = L-seryl-tRNA(Ser) + AMP + diphosphate + H(+). The catalysed reaction is tRNA(Sec) + L-serine + ATP = L-seryl-tRNA(Sec) + AMP + diphosphate + H(+). The protein operates within aminoacyl-tRNA biosynthesis; selenocysteinyl-tRNA(Sec) biosynthesis; L-seryl-tRNA(Sec) from L-serine and tRNA(Sec): step 1/1. In terms of biological role, catalyzes the attachment of serine to tRNA(Ser). Is also able to aminoacylate tRNA(Sec) with serine, to form the misacylated tRNA L-seryl-tRNA(Sec), which will be further converted into selenocysteinyl-tRNA(Sec). The polypeptide is Serine--tRNA ligase (serS1) (Methanosarcina barkeri (strain Fusaro / DSM 804)).